A 142-amino-acid polypeptide reads, in one-letter code: UPF0179 protein PYRAB06360 (142 aa).

This sequence belongs to the UPF0179 family.

This Pyrococcus abyssi (strain GE5 / Orsay) protein is UPF0179 protein PYRAB06360.